A 144-amino-acid polypeptide reads, in one-letter code: Cell division protein SepF (144 aa).

Residues 16-42 (DEMNEAPYTEAEQQEEEVPQAQKNERR) form a disordered region.

This sequence belongs to the SepF family. In terms of assembly, homodimer. Interacts with FtsZ.

It localises to the cytoplasm. Functionally, cell division protein that is part of the divisome complex and is recruited early to the Z-ring. Probably stimulates Z-ring formation, perhaps through the cross-linking of FtsZ protofilaments. Its function overlaps with FtsA. This is Cell division protein SepF from Lactobacillus gasseri (strain ATCC 33323 / DSM 20243 / BCRC 14619 / CIP 102991 / JCM 1131 / KCTC 3163 / NCIMB 11718 / NCTC 13722 / AM63).